A 380-amino-acid polypeptide reads, in one-letter code: Glucose-1-phosphate adenylyltransferase (380 aa).

Alpha-D-glucose 1-phosphate is bound by residues glycine 164, 179–180 (EK), and serine 190.

Belongs to the bacterial/plant glucose-1-phosphate adenylyltransferase family. Homotetramer.

The catalysed reaction is alpha-D-glucose 1-phosphate + ATP + H(+) = ADP-alpha-D-glucose + diphosphate. Its pathway is glycan biosynthesis; glycogen biosynthesis. Its function is as follows. Involved in the biosynthesis of ADP-glucose, a building block required for the elongation reactions to produce glycogen. Catalyzes the reaction between ATP and alpha-D-glucose 1-phosphate (G1P) to produce pyrophosphate and ADP-Glc. In Streptococcus pneumoniae (strain 70585), this protein is Glucose-1-phosphate adenylyltransferase.